Here is a 179-residue protein sequence, read N- to C-terminus: ATP synthase subunit delta (179 aa).

This sequence belongs to the ATPase delta chain family. As to quaternary structure, F-type ATPases have 2 components, F(1) - the catalytic core - and F(0) - the membrane proton channel. F(1) has five subunits: alpha(3), beta(3), gamma(1), delta(1), epsilon(1). F(0) has three main subunits: a(1), b(2) and c(10-14). The alpha and beta chains form an alternating ring which encloses part of the gamma chain. F(1) is attached to F(0) by a central stalk formed by the gamma and epsilon chains, while a peripheral stalk is formed by the delta and b chains.

It localises to the cell inner membrane. F(1)F(0) ATP synthase produces ATP from ADP in the presence of a proton or sodium gradient. F-type ATPases consist of two structural domains, F(1) containing the extramembraneous catalytic core and F(0) containing the membrane proton channel, linked together by a central stalk and a peripheral stalk. During catalysis, ATP synthesis in the catalytic domain of F(1) is coupled via a rotary mechanism of the central stalk subunits to proton translocation. Functionally, this protein is part of the stalk that links CF(0) to CF(1). It either transmits conformational changes from CF(0) to CF(1) or is implicated in proton conduction. The chain is ATP synthase subunit delta from Anaeromyxobacter dehalogenans (strain 2CP-1 / ATCC BAA-258).